Reading from the N-terminus, the 159-residue chain is MPLTTNLVGMHYRYPDHYEVEREKIREYAVAVQNDDAWYFEEKAASELGYKGLLAPLTFVCVFGYMAQSSFFKHANIAVKDAQIVQVDQVLKFYAPLVAGDKLYCDVYVDSVRVSHGTQIIVTKNVITNEAGDVVQETYTTLAGRAGEDGEEGFTDATA.

The protein belongs to the UPF0336 family.

This Mycolicibacterium paratuberculosis (strain ATCC BAA-968 / K-10) (Mycobacterium paratuberculosis) protein is UPF0336 protein MAP_4107.